The primary structure comprises 146 residues: Large ribosomal subunit protein uL15 (146 aa).

The tract at residues 1 to 62 (MRLHELRPKT…GQMPLQERLP (62 aa)) is disordered. The span at 10-21 (TNYKKSRKRKGR) shows a compositional bias: basic residues. Residues 42–52 (TGGGVRPGFEG) show a composition bias toward gly residues.

The protein belongs to the universal ribosomal protein uL15 family. As to quaternary structure, part of the 50S ribosomal subunit.

Functionally, binds to the 23S rRNA. This chain is Large ribosomal subunit protein uL15, found in Natranaerobius thermophilus (strain ATCC BAA-1301 / DSM 18059 / JW/NM-WN-LF).